The sequence spans 474 residues: Trehalose-6-phosphate synthase (474 aa).

Position 10 (Arg-10) interacts with D-glucose 6-phosphate. Residue 22–23 participates in UDP-alpha-D-glucose binding; that stretch reads GG. D-glucose 6-phosphate-binding residues include Tyr-77 and Asp-131. Arg-263 and Lys-268 together coordinate UDP-alpha-D-glucose. Residue Arg-301 coordinates D-glucose 6-phosphate. Residues Phe-340 and 366–370 contribute to the UDP-alpha-D-glucose site; that span reads LVAKE.

The protein belongs to the glycosyltransferase 20 family. Homotetramer.

The catalysed reaction is D-glucose 6-phosphate + UDP-alpha-D-glucose = alpha,alpha-trehalose 6-phosphate + UDP + H(+). The protein operates within glycan biosynthesis; trehalose biosynthesis. In terms of biological role, probably involved in the osmoprotection via the biosynthesis of trehalose. Catalyzes the transfer of glucose from UDP-alpha-D-glucose (UDP-Glc) to D-glucose 6-phosphate (Glc-6-P) to form trehalose-6-phosphate. Acts with retention of the anomeric configuration of the UDP-sugar donor. The chain is Trehalose-6-phosphate synthase from Escherichia coli O9:H4 (strain HS).